The sequence spans 241 residues: Ubiquinone biosynthesis O-methyltransferase (241 aa).

Residues Arg-44, Gly-64, Asp-85, and Met-129 each contribute to the S-adenosyl-L-methionine site.

The protein belongs to the methyltransferase superfamily. UbiG/COQ3 family.

It carries out the reaction a 3-demethylubiquinol + S-adenosyl-L-methionine = a ubiquinol + S-adenosyl-L-homocysteine + H(+). The enzyme catalyses a 3-(all-trans-polyprenyl)benzene-1,2-diol + S-adenosyl-L-methionine = a 2-methoxy-6-(all-trans-polyprenyl)phenol + S-adenosyl-L-homocysteine + H(+). It participates in cofactor biosynthesis; ubiquinone biosynthesis. Functionally, O-methyltransferase that catalyzes the 2 O-methylation steps in the ubiquinone biosynthetic pathway. In Serratia proteamaculans (strain 568), this protein is Ubiquinone biosynthesis O-methyltransferase.